Here is a 92-residue protein sequence, read N- to C-terminus: Antifungal protein B (92 aa).

The N-terminal stretch at 1–18 (MQITSIAIVFFAAMGAVA) is a signal peptide. A propeptide spanning residues 19–34 (NPIARESDDLDARDVQ) is cleaved from the precursor. 3 disulfides stabilise this stretch: Cys-42–Cys-70, Cys-49–Cys-77, and Cys-62–Cys-88.

The protein localises to the secreted. It localises to the host cytoplasm. Antifungal protein that acts as an inhibitor of growth of human pathogenic molds and yeasts. Is active against the model organism Neurospora crassa, the opportunistic human pathogens Aspergillus fumigatus, Trichophyton rubrum, and Aspergillus terreus. Provokes a reduction of the incidence of infections caused by Penicillium digitatum and Penicillium italicum in oranges and by Penicillium expansum in apples. Low doses of pafB have self-inhibition activity. Also shows activity against the model yeast Saccaromyces cerevisiae and the opportunistic human pathogen Candida albicans. No antibacterial activity is observed on the Gram-negative Escherichia coli and the Gram-positive Bacillus subtilis. Finally, also shows anti-viral activity in a model of HCoV 229E infected L132 cells. The polypeptide is Antifungal protein B (Penicillium chrysogenum (Penicillium notatum)).